Consider the following 765-residue polypeptide: Nucleolar transcription factor 1 (765 aa).

Methionine 1 carries the N-acetylmethionine modification. Positions methionine 1–arginine 21 are disordered. 2 consecutive DNA-binding regions (HMG box) follow at residues proline 112–arginine 180 and proline 196–isoleucine 264. Position 201 is a phosphothreonine (threonine 201). Residues serine 273, serine 336, and serine 364 each carry the phosphoserine modification. The HMG box 3 DNA-binding region spans threonine 298–leucine 362. Residues glutamine 370–methionine 379 are compositionally biased toward basic and acidic residues. Residues glutamine 370–valine 411 form a disordered region. A phosphoserine mark is found at serine 389, serine 412, serine 433, serine 435, serine 484, serine 495, serine 546, serine 584, and serine 638. 3 DNA-binding regions (HMG box) span residues proline 407 to arginine 475, proline 482 to arginine 549, and lysine 568 to valine 634. Positions tyrosine 456–arginine 487 are disordered. The segment covering lysine 457–arginine 487 has biased composition (basic and acidic residues). Residues serine 546–glutamine 576 are disordered. Positions isoleucine 649–asparagine 765 are disordered. Polar residues predominate over residues proline 664–lysine 674. The segment covering serine 677–serine 746 has biased composition (acidic residues). The span at glutamate 747 to asparagine 765 shows a compositional bias: low complexity.

In terms of assembly, homodimer. Part of Pol I pre-initiation complex (PIC), in which Pol I core assembles with RRN3 and promoter-bound UTBF and SL1/TIF-IB complex. Interacts with TOP2A in the context of Pol I complex. Interacts with TBP. Interacts with TAF1A. Interacts with RASL11A. Binds to IRS1 and PIK3CA. Interacts with DHX33. Interacts with PHF6. Interacts with CEBPA (isoform 1 and isoform 4). Interacts with DDX11. Interacts with NOP53. Interacts with ALKBH2. Post-translationally, phosphorylated and activated by PIK3CA.

Its subcellular location is the nucleus. The protein localises to the nucleolus. In terms of biological role, recognizes the ribosomal RNA gene promoter and activates transcription mediated by RNA polymerase I through cooperative interactions with the transcription factor SL1/TIF-IB complex. It binds specifically to the upstream control element. The sequence is that of Nucleolar transcription factor 1 (Ubtf) from Mus musculus (Mouse).